The primary structure comprises 20 residues: EQSAGFREYIDFFDGYSLTY.

The protein resides in the plastid. It is found in the chloroplast thylakoid lumen. The sequence is that of Thylakoid lumenal 22 kDa protein from Spinacia oleracea (Spinach).